The following is a 245-amino-acid chain: tRNA (guanine-N(7)-)-methyltransferase (245 aa).

Glu75, Glu100, Asp127, and Asp150 together coordinate S-adenosyl-L-methionine. The active site involves Asp150. Substrate is bound by residues Lys154, Asp186, and 223–226; that span reads TKFE.

The protein belongs to the class I-like SAM-binding methyltransferase superfamily. TrmB family.

It catalyses the reaction guanosine(46) in tRNA + S-adenosyl-L-methionine = N(7)-methylguanosine(46) in tRNA + S-adenosyl-L-homocysteine. It participates in tRNA modification; N(7)-methylguanine-tRNA biosynthesis. Functionally, catalyzes the formation of N(7)-methylguanine at position 46 (m7G46) in tRNA. The sequence is that of tRNA (guanine-N(7)-)-methyltransferase from Photobacterium profundum (strain SS9).